The sequence spans 775 residues: 5-methyltetrahydropteroyltriglutamate--homocysteine methyltransferase (775 aa).

Residues 16-19 (REMK) and Lys115 each bind 5-methyltetrahydropteroyltri-L-glutamate. L-homocysteine is bound by residues 435 to 437 (IGS) and Glu488. Residues 435–437 (IGS) and Glu488 contribute to the L-methionine site. Residues 519-520 (RC) and Trp565 each bind 5-methyltetrahydropteroyltri-L-glutamate. Asp603 is an L-homocysteine binding site. Residue Asp603 participates in L-methionine binding. Glu609 serves as a coordination point for 5-methyltetrahydropteroyltri-L-glutamate. Zn(2+) contacts are provided by His645, Cys647, and Glu669. His698 serves as the catalytic Proton donor. A Zn(2+)-binding site is contributed by Cys730.

The protein belongs to the vitamin-B12 independent methionine synthase family. It depends on Zn(2+) as a cofactor.

The catalysed reaction is 5-methyltetrahydropteroyltri-L-glutamate + L-homocysteine = tetrahydropteroyltri-L-glutamate + L-methionine. It participates in amino-acid biosynthesis; L-methionine biosynthesis via de novo pathway; L-methionine from L-homocysteine (MetE route): step 1/1. Functionally, catalyzes the transfer of a methyl group from 5-methyltetrahydrofolate to homocysteine resulting in methionine formation. This is 5-methyltetrahydropteroyltriglutamate--homocysteine methyltransferase from Coxiella burnetii (strain CbuK_Q154) (Coxiella burnetii (strain Q154)).